Here is a 714-residue protein sequence, read N- to C-terminus: Calpain-1 catalytic subunit (714 aa).

S2 bears the N-acetylserine mark. Residues L55–T354 enclose the Calpain catalytic domain. Ca(2+) contacts are provided by Q109 and D114. Active-site residues include C115, H272, and N296. The Ca(2+) site is built by N316, D318, and D323. A Phosphothreonine modification is found at T354. The domain III stretch occupies residues P355–D526. The tract at residues Q527–E542 is linker. EF-hand domains are found at residues E541–K576, F585–R618, N615–K650, and V680–A714. The interval I543–F713 is domain IV. The Ca(2+) site is built by D598, D600, N602, K604, E609, D628, D630, S632, S634, and E639.

Belongs to the peptidase C2 family. Forms a heterodimer with a small (regulatory) subunit CAPNS1. It depends on Ca(2+) as a cofactor. Post-translationally, undergoes calcium-induced successive autoproteolytic cleavages that generate a membrane-bound 78 kDa active form and an intracellular 75 kDa active form. Calpastatin reduces with high efficiency the transition from 78 kDa to 75 kDa calpain forms. As to expression, ubiquitous.

The protein localises to the cytoplasm. Its subcellular location is the cell membrane. It carries out the reaction Broad endopeptidase specificity.. With respect to regulation, activated by micromolar concentrations of calcium and inhibited by calpastatin. Calcium-regulated non-lysosomal thiol-protease which catalyzes limited proteolysis of substrates involved in cytoskeletal remodeling and signal transduction. Proteolytically cleaves CTBP1 at 'Asn-375', 'Gly-387' and 'His-409'. Cleaves and activates caspase-7 (CASP7). The polypeptide is Calpain-1 catalytic subunit (Homo sapiens (Human)).